The sequence spans 282 residues: MADSDIIEIKAKLWNGHINLRVVLAYKDQKVEYLCTIYRNSYITLKLPAIVEYFSAFVQGLSSKQLWFEYEGVPIKWNLPVGLLYDYLHLPSLLGNFESSSSWTVYLRYDDYPSDYIIPFIYKKDDGTVDFDRSLKEVIVNQLKQSCFVLNGNSKPIMSLSEANSIQLWVSIVDHNLSAYTSINKKIVPKDKAQKIPVRIFIPGTTTIVQAPIYPYGEEEPTSMRDVLSLHLPHLFAEREAIALPYIHGIDTQSLLDEPLLKTWEIFKHLDNFLYVVVIPRV.

Lys144 participates in a covalent cross-link: Glycyl lysine isopeptide (Lys-Gly) (interchain with G-Cter in ATG12).

The protein belongs to the ATG5 family. Conjugated with ATG12. Conjugated to ATG12; which is essential for autophagy.

Its subcellular location is the preautophagosomal structure membrane. Functionally, involved in cytoplasm to vacuole transport (Cvt) and autophagic vesicle formation. Autophagy is essential for maintenance of amino acid levels and protein synthesis under nitrogen starvation. Required for selective autophagic degradation of the nucleus (nucleophagy). Also required for mitophagy, which eliminates defective or superfluous mitochondria in order to fulfill cellular energy requirements and prevent excess ROS production. Conjugation with ATG12, through a ubiquitin-like conjugating system involving ATG7 as an E1-like activating enzyme and ATG10 as an E2-like conjugating enzyme, is essential for its function. The ATG12-ATG5 conjugate acts as an E3-like enzyme which is required for lipidation of ATG8 and ATG8 association to the vesicle membranes. The polypeptide is Autophagy protein 5 (ATG5) (Scheffersomyces stipitis (strain ATCC 58785 / CBS 6054 / NBRC 10063 / NRRL Y-11545) (Yeast)).